The primary structure comprises 244 residues: High affinity immunoglobulin epsilon receptor subunit beta (244 aa).

Residues 1 to 59 are Cytoplasmic-facing; the sequence is MDTESNRRANLALPQEPSSVPAFEVLEISPQEVSSGRLLKSASSPPLHTWLTVLKKEQE. The helical transmembrane segment at 60–79 threads the bilayer; it reads FLGVTQILTAMICLCFGTVV. Residues 80 to 97 lie on the Extracellular side of the membrane; it reads CSVLDISHIEGDIFSSFK. Residues 98 to 117 traverse the membrane as a helical segment; it reads AGYPFWGAIFFSISGMLSII. Residues 118-130 lie on the Cytoplasmic side of the membrane; that stretch reads SERRNATYLVRGS. The chain crosses the membrane as a helical span at residues 131 to 150; the sequence is LGANTASSIAGGTGITILII. Residues 151 to 180 lie on the Extracellular side of the membrane; the sequence is NLKKSLAYIHIHSCQKFFETKCFMASFSTE. The chain crosses the membrane as a helical span at residues 181 to 200; it reads IVVMMLFLTILGLGSAVSLT. Over 201-244 the chain is Cytoplasmic; that stretch reads ICGAGEELKGNKVPEDRVYEELNIYSATYSELEDPGEMSPPIDL. Residues Tyr219 and Tyr225 each carry the phosphotyrosine modification. Ser226 is modified (phosphoserine). Tyr229 carries the post-translational modification Phosphotyrosine.

The protein belongs to the MS4A family. Tetramer of an alpha chain, a beta chain, and two disulfide linked gamma chains. Binds LILRB1. Interacts with FGR, FES/FPS and LYN. Phosphorylated on tyrosine residues by LYN. Found on the surface of mast cells and basophils.

The protein localises to the membrane. In terms of biological role, high affinity receptor that binds to the Fc region of immunoglobulins epsilon. Aggregation of FCER1 by multivalent antigens is required for the full mast cell response, including the release of preformed mediators (such as histamine) by degranulation and de novo production of lipid mediators and cytokines. Also mediates the secretion of important lymphokines. Binding of allergen to receptor-bound IgE leads to cell activation and the release of mediators responsible for the manifestations of allergy. This Homo sapiens (Human) protein is High affinity immunoglobulin epsilon receptor subunit beta (MS4A2).